The primary structure comprises 74 residues: UPF0352 protein MS1910 (74 aa).

Belongs to the UPF0352 family.

The protein is UPF0352 protein MS1910 of Mannheimia succiniciproducens (strain KCTC 0769BP / MBEL55E).